Consider the following 540-residue polypeptide: Probable feruloyl esterase B-1 (540 aa).

The N-terminal stretch at 1–18 (MLVMQLLLPFLASTAAAA) is a signal peptide. N-linked (GlcNAc...) asparagine glycans are attached at residues asparagine 28, asparagine 49, asparagine 66, asparagine 95, asparagine 113, and asparagine 195. Intrachain disulfides connect cysteine 41–cysteine 90 and cysteine 76–cysteine 129. 3 cysteine pairs are disulfide-bonded: cysteine 202–cysteine 458, cysteine 271–cysteine 288, and cysteine 297–cysteine 308. Residue serine 203 is the Acyl-ester intermediate of the active site. Asparagine 234 is a glycosylation site (N-linked (GlcNAc...) asparagine). Residues aspartate 272, aspartate 275, alanine 277, aspartate 279, and isoleucine 281 each contribute to the Ca(2+) site. Asparagine 298, asparagine 328, and asparagine 367 each carry an N-linked (GlcNAc...) asparagine glycan. Active-site charge relay system residues include aspartate 417 and histidine 457. Asparagine 506 is a glycosylation site (N-linked (GlcNAc...) asparagine). The cysteines at positions 517 and 539 are disulfide-linked.

The protein belongs to the tannase family. In terms of assembly, homodimer.

The protein localises to the secreted. It carries out the reaction feruloyl-polysaccharide + H2O = ferulate + polysaccharide.. In terms of biological role, involved in degradation of plant cell walls. Hydrolyzes the feruloyl-arabinose ester bond in arabinoxylans as well as the feruloyl-galactose and feruloyl-arabinose ester bonds in pectin. The chain is Probable feruloyl esterase B-1 (faeB-1) from Aspergillus oryzae (strain ATCC 42149 / RIB 40) (Yellow koji mold).